A 325-amino-acid chain; its full sequence is Acetyl-coenzyme A carboxylase carboxyl transferase subunit alpha (325 aa).

The 255-residue stretch at 44–298 (QLEARADQLR…KAAIQDNLQA (255 aa)) folds into the CoA carboxyltransferase C-terminal domain.

It belongs to the AccA family. As to quaternary structure, acetyl-CoA carboxylase is a heterohexamer composed of biotin carboxyl carrier protein (AccB), biotin carboxylase (AccC) and two subunits each of ACCase subunit alpha (AccA) and ACCase subunit beta (AccD).

Its subcellular location is the cytoplasm. It carries out the reaction N(6)-carboxybiotinyl-L-lysyl-[protein] + acetyl-CoA = N(6)-biotinyl-L-lysyl-[protein] + malonyl-CoA. The protein operates within lipid metabolism; malonyl-CoA biosynthesis; malonyl-CoA from acetyl-CoA: step 1/1. Functionally, component of the acetyl coenzyme A carboxylase (ACC) complex. First, biotin carboxylase catalyzes the carboxylation of biotin on its carrier protein (BCCP) and then the CO(2) group is transferred by the carboxyltransferase to acetyl-CoA to form malonyl-CoA. The polypeptide is Acetyl-coenzyme A carboxylase carboxyl transferase subunit alpha (Picosynechococcus sp. (strain ATCC 27264 / PCC 7002 / PR-6) (Agmenellum quadruplicatum)).